The primary structure comprises 180 residues: uncharacterized protein (180 aa).

The protein belongs to the isochorismatase family.

This is an uncharacterized protein from Bacillus subtilis (strain 168).